Here is a 908-residue protein sequence, read N- to C-terminus: UPF0182 protein Csac_0864 (908 aa).

7 helical membrane-spanning segments follow: residues 22 to 42 (FVISILVILAIVFSIAFDLFL), 62 to 82 (FYVKLSVQVVSFMILFFVFFV), 98 to 118 (ISLLKKNILNVIVSVLLALIA), 166 to 186 (FLFYLVIFVCIYTVVLYIVLY), 208 to 228 (HIFFNLILIFVIKIFTLKYEM), 253 to 273 (YFRLSYIVLVAVILLSIYFFI), and 286 to 306 (SYIGWAVLGTIIATAFQYFVV).

Belongs to the UPF0182 family.

The protein resides in the cell membrane. This Caldicellulosiruptor saccharolyticus (strain ATCC 43494 / DSM 8903 / Tp8T 6331) protein is UPF0182 protein Csac_0864.